The following is a 375-amino-acid chain: MSASAPAAEGEGTPTQPASEKEPEMPGPREESEEEEDEDDEEEEEEEKEKSLIVEGKREKKKVERLTMQVSSLQREPFTIAQGKGQKLCEIERIHFFLSKKKTDELRNLHKLLYNRPGTVSSLKKNVGQFSGFPFEKGSVQYKKKEEMLKKFRNAMLKSICEVLDLERSGVNSELVKRILNFLMHPKPSGKPLPKSKKTCSKGSKKERNSSGMARKAKRTKCPEILSDESSSDEDEKKNKEESSDDEDKESEEEPPKKTAKREKPKQKATSKSKKSVKSANVKKADSSTTKKNQNSSKKESESEDSSDDEPLIKKLKKPPTDEELKETIKKLLASANLEEVTMKQICKKVYENYPTYDLTERKDFIKTTVKELIS.

Positions 1-61 (MSASAPAAEG…LIVEGKREKK (61 aa)) are disordered. Ser-2 is modified (N-acetylserine). A phosphothreonine mark is found at Thr-13 and Thr-15. A Phosphoserine modification is found at Ser-19. Basic and acidic residues predominate over residues 19 to 30 (SEKEPEMPGPRE). Over residues 31-47 (ESEEEEDEDDEEEEEEE) the composition is skewed to acidic residues. Position 32 is a phosphoserine; by CK2 (Ser-32). Residues 48 to 61 (KEKSLIVEGKREKK) are compositionally biased toward basic and acidic residues. Ser-51, Ser-72, Ser-121, and Ser-122 each carry phosphoserine. Residues 149-183 (LKKFRNAMLKSICEVLDLERSGVNSELVKRILNFL) form the SAP domain. Ser-159 carries the phosphoserine; by CK2 modification. Residues 184 to 325 (MHPKPSGKPL…LKKPPTDEEL (142 aa)) form a disordered region. The segment covering 194-203 (PKSKKTCSKG) has biased composition (basic residues). The residue at position 199 (Thr-199) is a Phosphothreonine; by CK2. 2 positions are modified to phosphoserine; by CK2: Ser-201 and Ser-204. Positions 205-221 (KKERNSSGMARKAKRTK) match the Nuclear localization signal motif. Phosphoserine occurs at positions 210, 227, 230, 231, and 232. Phosphoserine; by CK2 occurs at positions 243, 244, and 251. Over residues 243-253 (SSDDEDKESEE) the composition is skewed to acidic residues. Over residues 258–277 (KTAKREKPKQKATSKSKKSV) the composition is skewed to basic residues. Low complexity predominate over residues 278-296 (KSANVKKADSSTTKKNQNS). Ser-279 is modified (ADP-ribosylserine). Residues Ser-287 and Ser-288 each carry the phosphoserine; by CK2 modification. A phosphothreonine; by CK2 mark is found at Thr-289 and Thr-290. A phosphoserine; by CK2 mark is found at Ser-296, Ser-301, Ser-303, Ser-306, and Ser-307. The DEK-C domain occupies 319–375 (PPTDEELKETIKKLLASANLEEVTMKQICKKVYENYPTYDLTERKDFIKTTVKELIS). 2 DNA-binding regions span residues 337 to 351 (NLEEVTMKQICKKVY) and 367 to 371 (KTTVK).

In terms of assembly, found in a mRNA splicing-dependent exon junction complex (EJC) with DEK, RBM8A, RNPS1, SRRM1 and ALYREF/THOC4. Interacts with histones H2A, H2B, H3, H4, acetylated histone H4, non-phosphorylated DAXX and HDAC2. Component of the B-WICH complex, at least composed of SMARCA5/SNF2H, BAZ1B/WSTF, SF3B1, DEK, MYO1C, ERCC6, MYBBP1A and DDX21. Binds DNA. Phosphorylated by CK2. Phosphorylation fluctuates during the cell cycle with a moderate peak during G(1) phase, and weakens the binding of DEK to DNA. Ubiquitous. Expressed at relatively high levels.

It localises to the nucleus. In terms of biological role, involved in chromatin organization. The protein is Protein DEK (DEK) of Homo sapiens (Human).